Here is a 256-residue protein sequence, read N- to C-terminus: MANSPVMNVEVLRYNPEIDQEPHLSTYQVPYDNQTSLLDALGYIKDKLEPSLSYRWSCRMAICGSCGMMVNNKPKLACKTFLRDYSGHMRIEPLANFPIERDLVVDLSHFIESLEAIKPYIIGNEAPALDGKPHPSKELQVSRTKQTPAQLEKYRQFSMCINCGLCYAACPQFGLNPEFLGPAAITMAHRYNLDNRDHGKAKRMSLLNGKNGVWSCTFVGYCSEVCPKHVDPASAINQGKVESAKDYVISMLKPKG.

One can recognise a 2Fe-2S ferredoxin-type domain in the interval 7–97; that stretch reads MNVEVLRYNP…HMRIEPLANF (91 aa). Residue Tyr-14 participates in a menaquinone binding. [2Fe-2S] cluster is bound by residues Cys-58, Cys-63, Cys-66, and Cys-78. A 4Fe-4S ferredoxin-type domain is found at 151 to 180; it reads LEKYRQFSMCINCGLCYAACPQFGLNPEFL. Residues Cys-160, Cys-163, and Cys-166 each contribute to the [4Fe-4S] cluster site. [3Fe-4S] cluster-binding residues include Cys-170, Cys-216, and Cys-222. Residue Cys-226 coordinates [4Fe-4S] cluster. 237–240 serves as a coordination point for a menaquinone; the sequence is NQGK.

The protein belongs to the succinate dehydrogenase/fumarate reductase iron-sulfur protein family. As to quaternary structure, fumarate dehydrogenase forms part of an enzyme complex containing four subunits: a flavoprotein, an iron-sulfur, and two hydrophobic anchor proteins. The cofactor is [2Fe-2S] cluster. Requires [3Fe-4S] cluster as cofactor. It depends on [4Fe-4S] cluster as a cofactor.

It is found in the cell inner membrane. It carries out the reaction a quinone + succinate = fumarate + a quinol. The enzyme catalyses a menaquinone + succinate = a menaquinol + fumarate. This Haemophilus influenzae (strain ATCC 51907 / DSM 11121 / KW20 / Rd) protein is Fumarate reductase iron-sulfur subunit (frdB).